The chain runs to 372 residues: Queuine tRNA-ribosyltransferase (372 aa).

The active-site Proton acceptor is the Asp-89. Substrate-binding positions include 89–93 (DSGGF), Asp-161, and Gly-232. An RNA binding region spans residues 262–268 (GIGDLPS). The active-site Nucleophile is Asp-281. Residues 286–290 (TKAAR) form an RNA binding; important for wobble base 34 recognition region. Positions 319, 321, 324, and 351 each coordinate Zn(2+).

It belongs to the queuine tRNA-ribosyltransferase family. In terms of assembly, homodimer. Within each dimer, one monomer is responsible for RNA recognition and catalysis, while the other monomer binds to the replacement base PreQ1. The cofactor is Zn(2+).

It carries out the reaction 7-aminomethyl-7-carbaguanine + guanosine(34) in tRNA = 7-aminomethyl-7-carbaguanosine(34) in tRNA + guanine. The protein operates within tRNA modification; tRNA-queuosine biosynthesis. In terms of biological role, catalyzes the base-exchange of a guanine (G) residue with the queuine precursor 7-aminomethyl-7-deazaguanine (PreQ1) at position 34 (anticodon wobble position) in tRNAs with GU(N) anticodons (tRNA-Asp, -Asn, -His and -Tyr). Catalysis occurs through a double-displacement mechanism. The nucleophile active site attacks the C1' of nucleotide 34 to detach the guanine base from the RNA, forming a covalent enzyme-RNA intermediate. The proton acceptor active site deprotonates the incoming PreQ1, allowing a nucleophilic attack on the C1' of the ribose to form the product. After dissociation, two additional enzymatic reactions on the tRNA convert PreQ1 to queuine (Q), resulting in the hypermodified nucleoside queuosine (7-(((4,5-cis-dihydroxy-2-cyclopenten-1-yl)amino)methyl)-7-deazaguanosine). The protein is Queuine tRNA-ribosyltransferase of Chlamydia trachomatis serovar A (strain ATCC VR-571B / DSM 19440 / HAR-13).